Reading from the N-terminus, the 679-residue chain is UvrABC system protein B (679 aa).

Residues 25–412 form the Helicase ATP-binding domain; that stretch reads QGVNSGEEFQ…EGKFIEQVIR (388 aa). 38 to 45 contributes to the ATP binding site; it reads GATGTGKT. Residues 91–114 carry the Beta-hairpin motif; sequence YYDYYQPEAYVPVSDTYIAKTASI. The Helicase C-terminal domain occupies 429–583; that stretch reads QIDDLLSEIR…KKYNQINGIT (155 aa). The 36-residue stretch at 639–674 folds into the UVR domain; sequence PSLIDKLENKMKDAAKELNFEEAANLRDRIKKLRQK.

The protein belongs to the UvrB family. In terms of assembly, forms a heterotetramer with UvrA during the search for lesions. Interacts with UvrC in an incision complex.

The protein localises to the cytoplasm. Functionally, the UvrABC repair system catalyzes the recognition and processing of DNA lesions. A damage recognition complex composed of 2 UvrA and 2 UvrB subunits scans DNA for abnormalities. Upon binding of the UvrA(2)B(2) complex to a putative damaged site, the DNA wraps around one UvrB monomer. DNA wrap is dependent on ATP binding by UvrB and probably causes local melting of the DNA helix, facilitating insertion of UvrB beta-hairpin between the DNA strands. Then UvrB probes one DNA strand for the presence of a lesion. If a lesion is found the UvrA subunits dissociate and the UvrB-DNA preincision complex is formed. This complex is subsequently bound by UvrC and the second UvrB is released. If no lesion is found, the DNA wraps around the other UvrB subunit that will check the other stand for damage. The chain is UvrABC system protein B from Prochlorococcus marinus subsp. pastoris (strain CCMP1986 / NIES-2087 / MED4).